Here is a 316-residue protein sequence, read N- to C-terminus: Serpentine receptor class gamma-8 (316 aa).

7 helical membrane-spanning segments follow: residues 28–48 (FVQV…LYVV), 60–80 (PFFM…IFIT), 106–126 (LYYP…IFLT), 147–167 (FSRI…NTII), 186–206 (IIPW…VVMI), 235–255 (ACAA…MKVL), and 267–287 (LVQP…MIFA).

Belongs to the nematode receptor-like protein srg family.

The protein localises to the membrane. This is Serpentine receptor class gamma-8 (srg-8) from Caenorhabditis elegans.